The primary structure comprises 370 residues: MNQNSIRIKIKLAHNPYEVVIKKNGLARIGEELKKIGFKKATKVLVVTNKDVSVHYGKEFIHNLSDNGFNPTLIEIKAGEERKNLATISDIHNAAYTSRLERGSLMIALGGGVIGDMTGFAAATWLRGVSFVQVPTTLLAMVDASVGGKTGVNHPKGKNLIGAFHQPKLVLIDPITLKTLPEREFKAGMAEVIKYGVISDKKLFRKLEDAPRLDKLETLTDRFLLEIIQRSVQTKAHIVELDEREGGIRAVLNYGHTFGHAIEALCGYGTWLHGEAVSMGMIAIGQLALERNIWNISDLERQRKVLCQAGLPTIWPRVCAEDVIEILKSDKKVKDGEINFIVPTEIGKVEIIKNFTVNEIKQALQKLASK.

NAD(+) contacts are provided by residues 112 to 116, 136 to 137, Lys-149, Lys-158, and 176 to 179; these read GVIGD, TT, and TLKT. Glu-191, His-256, and His-273 together coordinate Zn(2+).

The protein belongs to the sugar phosphate cyclases superfamily. Dehydroquinate synthase family. It depends on Co(2+) as a cofactor. Zn(2+) is required as a cofactor. NAD(+) serves as cofactor.

Its subcellular location is the cytoplasm. The catalysed reaction is 7-phospho-2-dehydro-3-deoxy-D-arabino-heptonate = 3-dehydroquinate + phosphate. It functions in the pathway metabolic intermediate biosynthesis; chorismate biosynthesis; chorismate from D-erythrose 4-phosphate and phosphoenolpyruvate: step 2/7. Its function is as follows. Catalyzes the conversion of 3-deoxy-D-arabino-heptulosonate 7-phosphate (DAHP) to dehydroquinate (DHQ). The chain is 3-dehydroquinate synthase from Prochlorococcus marinus (strain MIT 9211).